The following is a 215-amino-acid chain: Octanoyltransferase (215 aa).

A BPL/LPL catalytic domain is found at 31–206 (TTAPDEIWLV…QLVKHLDYAE (176 aa)). Substrate is bound by residues 70–77 (RGGQVTYH), 137–139 (SLG), and 150–152 (GLA). Catalysis depends on Cys-168, which acts as the Acyl-thioester intermediate.

The protein belongs to the LipB family.

Its subcellular location is the cytoplasm. The catalysed reaction is octanoyl-[ACP] + L-lysyl-[protein] = N(6)-octanoyl-L-lysyl-[protein] + holo-[ACP] + H(+). The protein operates within protein modification; protein lipoylation via endogenous pathway; protein N(6)-(lipoyl)lysine from octanoyl-[acyl-carrier-protein]: step 1/2. In terms of biological role, catalyzes the transfer of endogenously produced octanoic acid from octanoyl-acyl-carrier-protein onto the lipoyl domains of lipoate-dependent enzymes. Lipoyl-ACP can also act as a substrate although octanoyl-ACP is likely to be the physiological substrate. This chain is Octanoyltransferase, found in Pseudomonas fluorescens (strain Pf0-1).